A 1771-amino-acid polypeptide reads, in one-letter code: Kinase D-interacting substrate of 220 kDa (1771 aa).

Over M1–W499 the chain is Cytoplasmic. 12 ANK repeats span residues L4–E33, C37–L66, D70–H99, G103–V132, Y136–C165, Y169–Q198, N202–L231, D235–I264, S268–I297, D301–I330, D334–A363, and K367–L396. In terms of domain architecture, KAP NTPase spans Y440 to L953. A helical transmembrane segment spans residues L500–V520. Residues H521–L524 are Extracellular-facing. A helical transmembrane segment spans residues G525–F545. Residues G546–S659 lie on the Cytoplasmic side of the membrane. Residues F660–F680 form a helical membrane-spanning segment. The Extracellular segment spans residues R681–K685. A helical transmembrane segment spans residues H686 to L706. The Cytoplasmic portion of the chain corresponds to N707–L1771. A phosphoserine mark is found at S882 and S885. Position 914 is a phosphothreonine (T914). S918 carries the phosphoserine modification. A mediates interaction with CRKL region spans residues P1089–P1092. The residue at position 1163 (S1163) is a Phosphoserine. Disordered regions lie at residues D1182–G1202, P1285–H1310, R1344–S1368, and L1397–R1564. Phosphoserine occurs at positions 1296, 1352, 1359, 1361, 1362, and 1365. The span at S1346–P1358 shows a compositional bias: polar residues. Over residues S1359–S1368 the composition is skewed to low complexity. A compositionally biased stretch (polar residues) spans S1403–N1430. Residues L1431–V1457 show a composition bias toward basic and acidic residues. Over residues Y1460–A1470 the composition is skewed to polar residues. A phosphoserine mark is found at S1521, S1526, S1555, and S1574. Acidic residues predominate over residues D1522–D1532. A compositionally biased stretch (basic and acidic residues) spans L1537–E1561. The tract at residues L1578–S1633 is disordered. A compositionally biased stretch (low complexity) spans D1585–S1594. Residues S1623 and S1633 each carry the phosphoserine modification. Residue T1679 is modified to Phosphothreonine. Residue S1681 is modified to Phosphoserine. Phosphothreonine is present on T1684. The span at L1713 to S1731 shows a compositional bias: polar residues. The disordered stretch occupies residues L1713–L1771. A PDZ-binding motif is present at residues E1766–L1771.

As to quaternary structure, found in a complex, at least composed of KIDINS220, MAGI2, NTRK1 and RAPGEF2; the complex is mainly formed at late endosomes in a nerve growth factor (NGF)-dependent manner. Interacts with RAPGEF2; the interaction is strengthened after NGF stimulation. Isoform 2 interacts (via C-terminal domain) with MAGI2 isoform 1 (via PDZ domain). Interacts with NTRK1, NTRK2, NTRK3, ERKL and NGFR. Can form a ternary complex with NGFR and NTRK1 and this complex is affected by the expression levels of KIDINS220/ARMS. An increase in KIDINS220/ARMS expression leads to a decreased association of NGFR and NTRK1. Interacts (via PDZ-binding motif) with SNTA1 and SNTB2 (via PDZ domains). Interacts with EPHA4 and PRKD1. Tyrosine phosphorylated by NTRK1, NTRK2, EPHB2 and EPHA4. Phosphorylation at Ser-918 is induced by phorbol ester treatment. Phosphorylation by NTRK2 is induced by brain-derived neurotrophic factor (BDNF) and neurotrophin-4/5. Phosphorylation by NTRK1 is induced by nerve growth factor (NGF). As to expression, abundant in developing and adult neural tissues as well as neuroendocrine cells and dendritic cells. Overexpressed in melanoma and melanoma cell lines.

It localises to the membrane. Its subcellular location is the late endosome. In terms of biological role, promotes a prolonged MAP-kinase signaling by neurotrophins through activation of a Rap1-dependent mechanism. Provides a docking site for the CRKL-C3G complex, resulting in Rap1-dependent sustained ERK activation. May play an important role in regulating postsynaptic signal transduction through the syntrophin-mediated localization of receptor tyrosine kinases such as EPHA4. In cooperation with SNTA1 can enhance EPHA4-induced JAK/STAT activation. Plays a role in nerve growth factor (NGF)-induced recruitment of RAPGEF2 to late endosomes and neurite outgrowth. May play a role in neurotrophin- and ephrin-mediated neuronal outgrowth and in axon guidance during neural development and in neuronal regeneration. Modulates stress-induced apoptosis of melanoma cells via regulation of the MEK/ERK signaling pathway. The protein is Kinase D-interacting substrate of 220 kDa (KIDINS220) of Homo sapiens (Human).